The chain runs to 276 residues: NAD-capped RNA hydrolase NudC (276 aa).

R82 is a substrate binding site. Positions 112 and 115 each coordinate Zn(2+). Substrate is bound at residue E125. Residues C130 and C133 each contribute to the Zn(2+) site. Position 138 (Y138) interacts with substrate. Residues 139 to 262 form the Nudix hydrolase domain; sequence PRISPSMIVL…SIARYLIDLY (124 aa). A divalent metal cation-binding residues include A172, E188, and E192. Residues 173-194 carry the Nudix box motif; it reads GFAEPGESAEDCLIREVREEVS. 206 to 213 contributes to the substrate binding site; sequence QCWPFPHS. Position 233 (E233) interacts with a divalent metal cation. A255 provides a ligand contact to substrate.

This sequence belongs to the Nudix hydrolase family. NudC subfamily. In terms of assembly, homodimer. It depends on Mg(2+) as a cofactor. Mn(2+) is required as a cofactor. Requires Zn(2+) as cofactor.

The enzyme catalyses a 5'-end NAD(+)-phospho-ribonucleoside in mRNA + H2O = a 5'-end phospho-adenosine-phospho-ribonucleoside in mRNA + beta-nicotinamide D-ribonucleotide + 2 H(+). It carries out the reaction NAD(+) + H2O = beta-nicotinamide D-ribonucleotide + AMP + 2 H(+). The catalysed reaction is NADH + H2O = reduced beta-nicotinamide D-ribonucleotide + AMP + 2 H(+). MRNA decapping enzyme that specifically removes the nicotinamide adenine dinucleotide (NAD) cap from a subset of mRNAs by hydrolyzing the diphosphate linkage to produce nicotinamide mononucleotide (NMN) and 5' monophosphate mRNA. The NAD-cap is present at the 5'-end of some mRNAs and stabilizes RNA against 5'-processing. Has preference for mRNAs with a 5'-end purine. Catalyzes the hydrolysis of a broad range of dinucleotide pyrophosphates. This chain is NAD-capped RNA hydrolase NudC, found in Pseudomonas fluorescens (strain ATCC BAA-477 / NRRL B-23932 / Pf-5).